Reading from the N-terminus, the 156-residue chain is Gamma-L-glutamyl-butirosin B gamma-glutamyl cyclotransferase (156 aa).

Residue 24–27 (YGTL) participates in substrate binding. The active-site Proton acceptor is E89.

Belongs to the gamma-glutamylcyclotransferase family.

It carries out the reaction gamma-L-glutamyl-butirosin B = butirosin B + 5-oxo-L-proline. It participates in antibiotic biosynthesis; butirosin biosynthesis. Cyclotransferase that catalyzes the last step in the biosynthesis of the aminoglycoside antibiotic butirosin B. Cleaves the amide bond via transamidation using the alpha-amine of the terminal gamma-L-glutamate of the side chain, releasing it as the cyclic 5-oxoproline. This is Gamma-L-glutamyl-butirosin B gamma-glutamyl cyclotransferase (btrG) from Niallia circulans (Bacillus circulans).